The primary structure comprises 124 residues: Ribonuclease P protein component 2 (124 aa).

It belongs to the eukaryotic/archaeal RNase P protein component 2 family. In terms of assembly, consists of a catalytic RNA component and at least 4-5 protein subunits.

It localises to the cytoplasm. The catalysed reaction is Endonucleolytic cleavage of RNA, removing 5'-extranucleotides from tRNA precursor.. Part of ribonuclease P, a protein complex that generates mature tRNA molecules by cleaving their 5'-ends. This is Ribonuclease P protein component 2 from Methanothermobacter thermautotrophicus (strain ATCC 29096 / DSM 1053 / JCM 10044 / NBRC 100330 / Delta H) (Methanobacterium thermoautotrophicum).